A 704-amino-acid polypeptide reads, in one-letter code: Elongation factor G (704 aa).

Residues 8 to 291 form the tr-type G domain; that stretch reads DKVRNIGIMA…AVVEYLASPV (284 aa). Residues 17–24, 90–94, and 144–147 contribute to the GTP site; these read AHIDAGKT, DTPGH, and NKMD.

It belongs to the TRAFAC class translation factor GTPase superfamily. Classic translation factor GTPase family. EF-G/EF-2 subfamily.

The protein localises to the cytoplasm. In terms of biological role, catalyzes the GTP-dependent ribosomal translocation step during translation elongation. During this step, the ribosome changes from the pre-translocational (PRE) to the post-translocational (POST) state as the newly formed A-site-bound peptidyl-tRNA and P-site-bound deacylated tRNA move to the P and E sites, respectively. Catalyzes the coordinated movement of the two tRNA molecules, the mRNA and conformational changes in the ribosome. This chain is Elongation factor G, found in Chlorobium phaeobacteroides (strain DSM 266 / SMG 266 / 2430).